The chain runs to 156 residues: 2-C-methyl-D-erythritol 2,4-cyclodiphosphate synthase (156 aa).

2 residues coordinate a divalent metal cation: Asp9 and His11. 4-CDP-2-C-methyl-D-erythritol 2-phosphate is bound by residues 9–11 (DAH) and 35–36 (HS). A divalent metal cation is bound at residue His43. Position 57–59 (57–59 (DIG)) interacts with 4-CDP-2-C-methyl-D-erythritol 2-phosphate.

The protein belongs to the IspF family. Homotrimer. It depends on a divalent metal cation as a cofactor.

The enzyme catalyses 4-CDP-2-C-methyl-D-erythritol 2-phosphate = 2-C-methyl-D-erythritol 2,4-cyclic diphosphate + CMP. The protein operates within isoprenoid biosynthesis; isopentenyl diphosphate biosynthesis via DXP pathway; isopentenyl diphosphate from 1-deoxy-D-xylulose 5-phosphate: step 4/6. In terms of biological role, involved in the biosynthesis of isopentenyl diphosphate (IPP) and dimethylallyl diphosphate (DMAPP), two major building blocks of isoprenoid compounds. Catalyzes the conversion of 4-diphosphocytidyl-2-C-methyl-D-erythritol 2-phosphate (CDP-ME2P) to 2-C-methyl-D-erythritol 2,4-cyclodiphosphate (ME-CPP) with a corresponding release of cytidine 5-monophosphate (CMP). The polypeptide is 2-C-methyl-D-erythritol 2,4-cyclodiphosphate synthase (Hydrogenobaculum sp. (strain Y04AAS1)).